Reading from the N-terminus, the 407-residue chain is Putative two-component response regulator ARR19 (407 aa).

A Response regulatory domain is found at 35-150; sequence NVLVVDTNFT…VMANIWQHIV (116 aa). The residue at position 86 (aspartate 86) is a 4-aspartylphosphate. A Nuclear localization signal motif is present at residues 214–217; it reads RKPR. The myb-like GARP DNA-binding region spans 217–271; it reads RMTWTEELHQKFLEAIEIIGGIEKANPKVLVECLQEMRIEGITRSNVASHLQKHR.

This sequence belongs to the ARR family. Type-B subfamily. As to quaternary structure, binds the target DNA as a monomer. Two-component system major event consists of a His-to-Asp phosphorelay between a sensor histidine kinase (HK) and a response regulator (RR). In plants, the His-to-Asp phosphorelay involves an additional intermediate named Histidine-containing phosphotransfer protein (HPt). This multistep phosphorelay consists of a His-Asp-His-Asp sequential transfer of a phosphate group between first a His and an Asp of the HK protein, followed by the transfer to a conserved His of the HPt protein and finally the transfer to an Asp in the receiver domain of the RR protein. In terms of tissue distribution, detected in trichomes and siliques.

The protein resides in the nucleus. Its function is as follows. Putative transcriptional activator that binds specifically to the DNA sequence 5'-[AG]GATT-3'. Functions as a response regulator involved in His-to-Asp phosphorelay signal transduction system. Phosphorylation of the Asp residue in the receiver domain activates the ability of the protein to promote the transcription of target genes. Could directly activate some type-A response regulators in response to cytokinins. The chain is Putative two-component response regulator ARR19 (ARR19) from Arabidopsis thaliana (Mouse-ear cress).